The primary structure comprises 255 residues: Phosphate import ATP-binding protein PstB (255 aa).

One can recognise an ABC transporter domain in the interval 9–250; that stretch reads MYAQGLQFYY…PRNKQTEDYI (242 aa). 41-48 is an ATP binding site; the sequence is GPSGCGKS.

This sequence belongs to the ABC transporter superfamily. Phosphate importer (TC 3.A.1.7) family. In terms of assembly, the complex is composed of two ATP-binding proteins (PstB), two transmembrane proteins (PstC and PstA) and a solute-binding protein (PstS).

It localises to the cell inner membrane. The catalysed reaction is phosphate(out) + ATP + H2O = ADP + 2 phosphate(in) + H(+). Functionally, part of the ABC transporter complex PstSACB involved in phosphate import. Responsible for energy coupling to the transport system. The protein is Phosphate import ATP-binding protein PstB of Nitratidesulfovibrio vulgaris (strain ATCC 29579 / DSM 644 / CCUG 34227 / NCIMB 8303 / VKM B-1760 / Hildenborough) (Desulfovibrio vulgaris).